A 206-amino-acid polypeptide reads, in one-letter code: Glutathione peroxidase 1 (206 aa).

Ser37 is modified (phosphoserine). The active site involves Sec52. A non-standard amino acid (selenocysteine) is located at residue Sec52. N6-acetyllysine; alternate is present on residues Lys91, Lys117, and Lys151. Residues Lys91, Lys117, and Lys151 each carry the N6-succinyllysine; alternate modification. Phosphoserine occurs at positions 200 and 204.

It belongs to the glutathione peroxidase family. In terms of assembly, homotetramer. Interacts with MIEN1. During periods of oxidative stress, Sec-52 may react with a superoxide radical, irreversibly lose hydroselenide and be converted to dehydroalanine.

It localises to the cytoplasm. It is found in the mitochondrion. It carries out the reaction 2 glutathione + H2O2 = glutathione disulfide + 2 H2O. The catalysed reaction is a hydroperoxy polyunsaturated fatty acid + 2 glutathione = a hydroxy polyunsaturated fatty acid + glutathione disulfide + H2O. The enzyme catalyses tert-butyl hydroperoxide + 2 glutathione = tert-butanol + glutathione disulfide + H2O. It catalyses the reaction cumene hydroperoxide + 2 glutathione = 2-phenylpropan-2-ol + glutathione disulfide + H2O. It carries out the reaction (13S)-hydroperoxy-(9Z,11E)-octadecadienoate + 2 glutathione = (13S)-hydroxy-(9Z,11E)-octadecadienoate + glutathione disulfide + H2O. The catalysed reaction is (9S)-hydroperoxy-(10E,12Z)-octadecadienoate + 2 glutathione = (9S)-hydroxy-(10E,12Z)-octadecadienoate + glutathione disulfide + H2O. The enzyme catalyses (5S)-hydroperoxy-(6E,8Z,11Z,14Z)-eicosatetraenoate + 2 glutathione = (5S)-hydroxy-(6E,8Z,11Z,14Z)-eicosatetraenoate + glutathione disulfide + H2O. It catalyses the reaction (12S)-hydroperoxy-(5Z,8Z,10E,14Z)-eicosatetraenoate + 2 glutathione = (12S)-hydroxy-(5Z,8Z,10E,14Z)-eicosatetraenoate + glutathione disulfide + H2O. It carries out the reaction (12R)-hydroperoxy-(5Z,8Z,10E,14Z)-eicosatetraenoate + 2 glutathione = (12R)-hydroxy-(5Z,8Z,10E,14Z)-eicosatetraenoate + glutathione disulfide + H2O. The catalysed reaction is (15S)-hydroperoxy-(5Z,8Z,11Z,13E)-eicosatetraenoate + 2 glutathione = (15S)-hydroxy-(5Z,8Z,11Z,13E)-eicosatetraenoate + glutathione disulfide + H2O. The enzyme catalyses (5S)-hydroperoxy-(6E,8Z,11Z,14Z,17Z)-eicosapentaenoate + 2 glutathione = (5S)-hydroxy-(6E,8Z,11Z,14Z,17Z)-eicosapentaenoate + glutathione disulfide + H2O. It catalyses the reaction (12S)-hydroperoxy-(5Z,8Z,10E,14Z,17Z)-eicosapentaenoate + 2 glutathione = (12S)-hydroxy-(5Z,8Z,10E,14Z,17Z)-eicosapentaenoate + glutathione disulfide + H2O. It carries out the reaction (15S)-hydroperoxy-(5Z,8Z,11Z,13E,17Z)-eicosapentaenoate + 2 glutathione = (15S)-hydroxy-(5Z,8Z,11Z,13E,17Z)-eicosapentaenoate + glutathione disulfide + H2O. The catalysed reaction is (15S)-hydroperoxy-(11Z,13E)-eicosadienoate + 2 glutathione = (15S)-hydroxy-(11Z,13E)-eicosadienoate + glutathione disulfide + H2O. The enzyme catalyses (17S)-hydroperoxy-(4Z,7Z,10Z,13Z,15E,19Z)-docosahexaenoate + 2 glutathione = (17S)-hydroxy-(4Z,7Z,10Z,13Z,15E,19Z)-docosahexaenoate + glutathione disulfide + H2O. Functionally, catalyzes the reduction of hydroperoxides in a glutathione-dependent manner thus regulating cellular redox homeostasis. Can reduce small soluble hydroperoxides such as H2O2, cumene hydroperoxide and tert-butyl hydroperoxide, as well as several fatty acid-derived hydroperoxides. In platelets catalyzes the reduction of 12-hydroperoxyeicosatetraenoic acid, the primary product of the arachidonate 12-lipoxygenase pathway. This Sus scrofa (Pig) protein is Glutathione peroxidase 1 (GPX1).